A 65-amino-acid chain; its full sequence is Large ribosomal subunit protein bL31 (65 aa).

The Zn(2+) site is built by Cys-16, Cys-18, Cys-36, and Cys-39.

This sequence belongs to the bacterial ribosomal protein bL31 family. Type A subfamily. In terms of assembly, part of the 50S ribosomal subunit. It depends on Zn(2+) as a cofactor.

Functionally, binds the 23S rRNA. The polypeptide is Large ribosomal subunit protein bL31 (Geotalea daltonii (strain DSM 22248 / JCM 15807 / FRC-32) (Geobacter daltonii)).